The following is a 191-amino-acid chain: Prostaglandin-H2 D-isomerase (191 aa).

Positions methionine 1–alanine 24 are cleaved as a signal peptide. Position 25 is a pyrrolidone carboxylic acid (glutamine 25). Asparagine 51 carries N-linked (GlcNAc...) asparagine glycosylation. Cysteine 65 functions as the Nucleophile in the catalytic mechanism. N-linked (GlcNAc...) asparagine glycosylation is present at asparagine 78. An intrachain disulfide couples cysteine 89 to cysteine 186.

Belongs to the calycin superfamily. Lipocalin family. Monomer. In terms of processing, N- and O-glycosylated. Both N-glycosylation recognition sites are almost quantitatively occupied by N-glycans of the biantennary complex type, with a considerable proportion of structures bearing a bisecting GlcNAc. N-glycan at Asn-78: dHex1Hex5HexNAc4. Agalacto structure as well as sialylated and nonsialylated oligosaccharides bearing alpha2-3- and/or alpha2-6-linked NeuNAc are present.

Its subcellular location is the rough endoplasmic reticulum. It is found in the nucleus membrane. It localises to the golgi apparatus. The protein localises to the cytoplasm. The protein resides in the perinuclear region. Its subcellular location is the secreted. The catalysed reaction is prostaglandin H2 = prostaglandin D2. Its function is as follows. Catalyzes the conversion of PGH2 to PGD2, a prostaglandin involved in smooth muscle contraction/relaxation and a potent inhibitor of platelet aggregation. Involved in a variety of CNS functions, such as sedation, NREM sleep and PGE2-induced allodynia, and may have an anti-apoptotic role in oligodendrocytes. Binds small non-substrate lipophilic molecules, including biliverdin, bilirubin, retinal, retinoic acid and thyroid hormone, and may act as a scavenger for harmful hydrophobic molecules and as a secretory retinoid and thyroid hormone transporter. Possibly involved in development and maintenance of the blood-brain, blood-retina, blood-aqueous humor and blood-testis barrier. It is likely to play important roles in both maturation and maintenance of the central nervous system and male reproductive system. Involved in PLA2G3-dependent maturation of mast cells. PLA2G3 is secreted by immature mast cells and acts on nearby fibroblasts upstream to PTDGS to synthesize PGD2, which in turn promotes mast cell maturation and degranulation via PTGDR. This Felis catus (Cat) protein is Prostaglandin-H2 D-isomerase (PTGDS).